Reading from the N-terminus, the 120-residue chain is Alanine racemase (120 aa).

Tyrosine 24 (proton acceptor; specific for L-alanine) is an active-site residue.

Belongs to the alanine racemase family. As to quaternary structure, homodimer. Pyridoxal 5'-phosphate is required as a cofactor.

It carries out the reaction L-alanine = D-alanine. Its function is as follows. Highly specific to D- and L-alanine and does not catalyze the racemization of other amino acids. In Penaeus monodon (Giant tiger prawn), this protein is Alanine racemase.